A 580-amino-acid chain; its full sequence is Type II methyltransferase M.BanIII (580 aa).

This sequence belongs to the N(4)/N(6)-methyltransferase family.

The catalysed reaction is a 2'-deoxyadenosine in DNA + S-adenosyl-L-methionine = an N(6)-methyl-2'-deoxyadenosine in DNA + S-adenosyl-L-homocysteine + H(+). Functionally, a gamma subtype methylase, recognizes the double-stranded sequence 5'-ATCGAT-3', methylates A-5 on both strands, and protects the DNA from cleavage by the BanIII endonuclease. In Aneurinibacillus aneurinilyticus (Bacillus aneurinolyticus), this protein is Type II methyltransferase M.BanIII (banIIIM).